Consider the following 318-residue polypeptide: tRNA U34 carboxymethyltransferase (318 aa).

Carboxy-S-adenosyl-L-methionine is bound by residues K85, W99, K104, G124, 175–176, M190, Y194, and R311; that span reads LD.

Belongs to the class I-like SAM-binding methyltransferase superfamily. CmoB family. In terms of assembly, homotetramer.

The enzyme catalyses carboxy-S-adenosyl-L-methionine + 5-hydroxyuridine(34) in tRNA = 5-carboxymethoxyuridine(34) in tRNA + S-adenosyl-L-homocysteine + H(+). Catalyzes carboxymethyl transfer from carboxy-S-adenosyl-L-methionine (Cx-SAM) to 5-hydroxyuridine (ho5U) to form 5-carboxymethoxyuridine (cmo5U) at position 34 in tRNAs. This chain is tRNA U34 carboxymethyltransferase, found in Ruthia magnifica subsp. Calyptogena magnifica.